Reading from the N-terminus, the 342-residue chain is D-erythrose-4-phosphate dehydrogenase (342 aa).

An NAD(+)-binding site is contributed by 11–12 (RI). Substrate-binding positions include 153-155 (SCT), R199, 212-213 (TK), and R235. Catalysis depends on C154, which acts as the Nucleophile. Residue N317 coordinates NAD(+).

This sequence belongs to the glyceraldehyde-3-phosphate dehydrogenase family. Epd subfamily. In terms of assembly, homotetramer.

It is found in the cytoplasm. It carries out the reaction D-erythrose 4-phosphate + NAD(+) + H2O = 4-phospho-D-erythronate + NADH + 2 H(+). It functions in the pathway cofactor biosynthesis; pyridoxine 5'-phosphate biosynthesis; pyridoxine 5'-phosphate from D-erythrose 4-phosphate: step 1/5. Catalyzes the NAD-dependent conversion of D-erythrose 4-phosphate to 4-phosphoerythronate. This chain is D-erythrose-4-phosphate dehydrogenase, found in Shewanella denitrificans (strain OS217 / ATCC BAA-1090 / DSM 15013).